The primary structure comprises 951 residues: Bromodomain-containing protein 8 (951 aa).

Lys-85 carries the N6-acetyllysine modification. A coiled-coil region spans residues 97-171 (VRKLTAERVE…ATDAAYQARQ (75 aa)). A disordered region spans residues 161 to 273 (KATDAAYQAR…TPPPSPLLSE (113 aa)). The segment covering 204 to 226 (TPTTMEEATSGVTPGTLPSTPVT) has biased composition (polar residues). Residues Ser-456 and Ser-460 each carry the phosphoserine modification. Positions 520-547 (EENDDPQSLPGPWEHPIQQERDKPVPLP) are disordered. Lys-542 is covalently cross-linked (Glycyl lysine isopeptide (Lys-Gly) (interchain with G-Cter in SUMO2)). Lys-554 carries the N6-acetyllysine; alternate modification. Lys-554 participates in a covalent cross-link: Glycyl lysine isopeptide (Lys-Gly) (interchain with G-Cter in SUMO1); alternate. Residue Lys-554 forms a Glycyl lysine isopeptide (Lys-Gly) (interchain with G-Cter in SUMO2); alternate linkage. Lys-582 is covalently cross-linked (Glycyl lysine isopeptide (Lys-Gly) (interchain with G-Cter in SUMO2)). A disordered region spans residues 584 to 745 (EPTEPEPGMS…PVSESDDGFS (162 aa)). Residues 610–622 (PELRSQDSDEEPR) are compositionally biased toward basic and acidic residues. A Glycyl lysine isopeptide (Lys-Gly) (interchain with G-Cter in SUMO2) cross-link involves residue Lys-648. The residue at position 652 (Ser-652) is a Phosphoserine. Residues 673-688 (ETQHKFEMSDSLKEES) are compositionally biased toward basic and acidic residues. Lys-685 is covalently cross-linked (Glycyl lysine isopeptide (Lys-Gly) (interchain with G-Cter in SUMO2)). Phosphoserine occurs at positions 694, 710, and 714. A Bromo domain is found at 779 to 884 (IQAQKIWKKA…RDVLEQIQQF (106 aa)). The interval 900 to 922 (AKSLRGRDSTRKQDASEKDSVPM) is disordered. Residues 904-919 (RGRDSTRKQDASEKDS) are compositionally biased toward basic and acidic residues.

As to quaternary structure, component of the NuA4 histone acetyltransferase complex which contains the catalytic subunit KAT5/TIP60 and the subunits EP400, TRRAP/PAF400, BRD8/SMAP, EPC1, DMAP1/DNMAP1, RUVBL1/TIP49, RUVBL2, ING3, actin, ACTL6A/BAF53A, MORF4L1/MRG15, MORF4L2/MRGX, MRGBP, YEATS4/GAS41, VPS72/YL1 and MEAF6. Component of a NuA4-related complex which contains EP400, TRRAP/PAF400, SRCAP, BRD8/SMAP, EPC1, DMAP1/DNMAP1, RUVBL1/TIP49, RUVBL2, actin, ACTL6A/BAF53A, VPS72 and YEATS4/GAS41. BRD8 isoform 2 interacts with RXRA/NR2B1 and THRB/ERBA2. Component of a SWR1-like complex.

Its subcellular location is the nucleus. May act as a coactivator during transcriptional activation by hormone-activated nuclear receptors (NR). Stimulates transcriptional activation by AR/DHTR, ESR1/NR3A1, RXRA/NR2B1 and THRB/ERBA2. Component of the NuA4 histone acetyltransferase (HAT) complex which is involved in transcriptional activation of select genes principally by acetylation of nucleosomal histones H4 and H2A. This modification may both alter nucleosome - DNA interactions and promote interaction of the modified histones with other proteins which positively regulate transcription. This complex may be required for the activation of transcriptional programs associated with oncogene and proto-oncogene mediated growth induction, tumor suppressor mediated growth arrest and replicative senescence, apoptosis, and DNA repair. NuA4 may also play a direct role in DNA repair when recruited to sites of DNA damage. Component of a SWR1-like complex that specifically mediates the removal of histone H2A.Z/H2AZ1 from the nucleosome. In Mus musculus (Mouse), this protein is Bromodomain-containing protein 8 (Brd8).